A 52-amino-acid polypeptide reads, in one-letter code: Ribosome biogenesis protein Nop10 (52 aa).

The protein belongs to the NOP10 family.

In terms of biological role, involved in ribosome biogenesis; more specifically in 18S rRNA pseudouridylation and in cleavage of pre-rRNA. This is Ribosome biogenesis protein Nop10 from Methanococcus vannielii (strain ATCC 35089 / DSM 1224 / JCM 13029 / OCM 148 / SB).